We begin with the raw amino-acid sequence, 172 residues long: Photosystem I assembly protein Ycf3 (172 aa).

3 TPR repeats span residues 35 to 68 (AFSY…EEDP), 72 to 105 (SYIL…NSQL), and 120 to 153 (GVKA…SPNN).

This sequence belongs to the Ycf3 family.

The protein resides in the plastid. It localises to the chloroplast thylakoid membrane. In terms of biological role, essential for the assembly of the photosystem I (PSI) complex. May act as a chaperone-like factor to guide the assembly of the PSI subunits. The chain is Photosystem I assembly protein Ycf3 from Guillardia theta (Cryptophyte).